A 490-amino-acid chain; its full sequence is Pentatricopeptide repeat-containing protein At2g20710, mitochondrial (490 aa).

The transit peptide at 1–86 (MKHLLLLRLV…IKMLRKFSRF (86 aa)) directs the protein to the mitochondrion. PPR repeat units follow at residues 138 to 172 (NYHLYGALLNCYASKKVLHKAEQVFQEMKELGFLK), 173 to 207 (GCLPYNVMLNLYVRTGKYTMVEKLLREMEDETVKP), 208 to 243 (DIFTVNTRLHAYSVVSDVEGMEKFLMRCEADQGLHL), 244 to 274 (DWRTYADTANGYIKAGLTEKALEMLRKSEQM), 280 to 310 (RKHAYEVLMSFYGAAGKKEEVYRLWSLYKEL), 314 to 344 (YNTGYISVISALLKMDDIEEVEKIMEEWEAG), 349 to 379 (DIRIPHLLITGYCKKGMMEKAEEVVNILVQK), and 384 to 421 (DTSTWERLALGYKMAGKMEKAVEKWKRAIEVSKPGWRP).

This sequence belongs to the PPR family. P subfamily.

It is found in the mitochondrion. This Arabidopsis thaliana (Mouse-ear cress) protein is Pentatricopeptide repeat-containing protein At2g20710, mitochondrial.